The following is a 397-amino-acid chain: MSYARRSCICGLFLLFLALVCEANSGFIGVKDSHFELNGSPFLFNGFNSYWLMHVAADPTERYKVTEVLKDASVAGLSVCRTWAFSDGGDRALQISPGIYDERVFQGLDFVIAEAKKYGIRLILSFVNQWNDFGGKAQYVWWARNAGAQISNDDEFYTHPMLKKYLKNHIEKVVTRLNSITKVAYKDDPTIMAWELMNEPRDQADYSGKTVNGWVQEMASFVKSLDNKHLLEVGMEGFYGDSIPERKSVNPGYQVGTDFISNHLINEIDFATIHAYTDQWVSGQSDDAQLVWMEKWITSHWEDARNILKKPLVLAEFGKSSRGQGSRDIFMSSVYRNVYNLAKEGGTMAGSLVWQLMAHGMENYDDGYCIVLGQTPSTTQIISDQAHVMTALARSLN.

An N-terminal signal peptide occupies residues 1 to 23; that stretch reads MSYARRSCICGLFLLFLALVCEA. Substrate is bound by residues W83 and N198. The active-site Proton donor is the E199. Y276 is a binding site for substrate. E316 serves as the catalytic Nucleophile. Substrate is bound at residue W354.

It belongs to the glycosyl hydrolase 5 (cellulase A) family.

It is found in the secreted. The catalysed reaction is Random hydrolysis of (1-&gt;4)-beta-D-mannosidic linkages in mannans, galactomannans and glucomannans.. This is Mannan endo-1,4-beta-mannosidase 1 (MAN1) from Solanum lycopersicum (Tomato).